The primary structure comprises 264 residues: 3-methyl-2-oxobutanoate hydroxymethyltransferase (264 aa).

Positions 45 and 84 each coordinate Mg(2+). Residues 45–46 (DS), aspartate 84, and lysine 112 contribute to the 3-methyl-2-oxobutanoate site. Residue glutamate 114 coordinates Mg(2+). The Proton acceptor role is filled by glutamate 181.

This sequence belongs to the PanB family. In terms of assembly, homodecamer; pentamer of dimers. The cofactor is Mg(2+).

Its subcellular location is the cytoplasm. The catalysed reaction is 3-methyl-2-oxobutanoate + (6R)-5,10-methylene-5,6,7,8-tetrahydrofolate + H2O = 2-dehydropantoate + (6S)-5,6,7,8-tetrahydrofolate. It functions in the pathway cofactor biosynthesis; (R)-pantothenate biosynthesis; (R)-pantoate from 3-methyl-2-oxobutanoate: step 1/2. Functionally, catalyzes the reversible reaction in which hydroxymethyl group from 5,10-methylenetetrahydrofolate is transferred onto alpha-ketoisovalerate to form ketopantoate. This Shewanella frigidimarina (strain NCIMB 400) protein is 3-methyl-2-oxobutanoate hydroxymethyltransferase.